The chain runs to 207 residues: Large ribosomal subunit protein uL4 (207 aa).

The interval 45-78 is disordered; it reads RQGTHKTKNRAEVSGGGRKPWRQKGTGRARQGSI.

It belongs to the universal ribosomal protein uL4 family. As to quaternary structure, part of the 50S ribosomal subunit.

In terms of biological role, one of the primary rRNA binding proteins, this protein initially binds near the 5'-end of the 23S rRNA. It is important during the early stages of 50S assembly. It makes multiple contacts with different domains of the 23S rRNA in the assembled 50S subunit and ribosome. Forms part of the polypeptide exit tunnel. This chain is Large ribosomal subunit protein uL4, found in Geobacillus sp. (strain WCH70).